Reading from the N-terminus, the 1021-residue chain is Receptor-like protein EIX2 (1021 aa).

Positions 1–24 (MGKRTNPRHFLVTWSLLLLETAFG) are cleaved as a signal peptide. The N-cap stretch occupies residues 25–109 (LTSREVNKTL…PILTGKVSPS (85 aa)). The Extracellular segment spans residues 25-963 (LTSREVNKTL…DDDDEFSSLE (939 aa)). An N-linked (GlcNAc...) asparagine glycan is attached at Asn-31. 6 LRR repeats span residues 113 to 136 (LEYLNFLDLSVNGFENSEIPRFIG), 138 to 161 (LKRLEYLNLSSSDFSGEIPAQFQN), 162 to 184 (LTSLRILDLGNNNLIVKDLVWLS), 186 to 211 (LSSLEFLRLGGNDFQARNWFREITKV), 214 to 237 (LKELDLSVCGLSKFVPSPADVANS), and 239 to 262 (LISLSVLHLCCNEFSTSSEYSWLF). Residues Asn-145 and Asn-161 are each glycosylated (N-linked (GlcNAc...) asparagine). Asn-236 carries an N-linked (GlcNAc...) asparagine glycan. Asn-263 carries an N-linked (GlcNAc...) asparagine glycan. LRR repeat units lie at residues 265–288 (STSLTSIDLSHNQLSRQIDDRFGS), 290–313 (MYLEHLNLANNFGAEGGVPSSFGN), 314–337 (LTRLHYLDMSNTQTYQWLPELFLR), 342–365 (RKSLEVLGLNDNSLFGSIVNVTRF), 366–388 (SSLKKLYLQKNMLNGFFMERVGQ), 389–412 (VSSLEYLDLSDNQMRGPLPDLALF), 413–436 (PSLRELHLGSNQFQGRIPQGIGKL), 437–459 (SQLRIFDVSSNRLEGLPESMGQL), 461–483 (NLERFDASYNVLKGTITESHFSN), 484–507 (LSSLVDLDLSFNLLSLNTRFDWVP), 509–532 (FQLQFIRLPSCNMGPSFPKWLQTQ), 533–555 (NNYTLLDISLANISDMLPSWFSN), 557–581 (PPELKILNLSNNHISGRVSEFIVSK), and 583–607 (DYMIIDLSSNNFSGHLPLVPANIQI). An N-linked (GlcNAc...) asparagine glycan is attached at Asn-313. Asn-483 is a glycosylation site (N-linked (GlcNAc...) asparagine). Residues Asn-534, Asn-544, Asn-564, and Asn-593 are each glycosylated (N-linked (GlcNAc...) asparagine). The LRR 21; degenerate repeat unit spans residues 608–626 (FYLHKNHFSGSISSICRNT). 6 LRR repeats span residues 627-651 (IGAATSIDLSRNQFSGEVPDCWMNM), 652-675 (SNLAVLNLAYNNFSGKVPQSLGSL), 677-698 (NLEALYIRQNSFRGMLPSFSQC), 699-722 (QLLQILDIGGNKLTGRIPAWIGTD), 723-747 (LLQLRILSLRSNKFDGSIPSLICQL), and 749-773 (FLQILDLSENGLSGKIPQCLNNFTI). Residues Asn-650 and Asn-663 are each glycosylated (N-linked (GlcNAc...) asparagine). Asn-770 and Asn-778 each carry an N-linked (GlcNAc...) asparagine glycan. LRR repeat units follow at residues 818–842 (LLYLKIIDLSSNKLVGGIPKEIAEM), 843–866 (RGLRSLNLSRNDLNGTVVEGIGQM), 867–890 (KLLESLDLSRNQLSGMIPQGLSNL), and 892–913 (FLSVLDLSNNHLSGRIPSSTQL). N-linked (GlcNAc...) asparagine glycans are attached at residues Asn-849, Asn-856, and Asn-889. Residues 914–963 (QSFDRSSYSGNAQLCGPPLEECPGYAPPIDRGSNTNPQEHDDDDEFSSLE) are C-cap/acidic domain. The helical transmembrane segment at 964–984 (FYVSMVLGFFVTFWGILGCLI) threads the bilayer. Topologically, residues 985–1021 (VNRSWRNAYFTFLTDMKSWLHMTSRVCFARLKGKLRN) are cytoplasmic.

It belongs to the RLP family. Interacts with EIX elicitor protein.

It is found in the cell membrane. Its function is as follows. Involved in plant defense. Confers resistance to the fungal pathogen T.viride through recognition of the EIX elicitor protein. The sequence is that of Receptor-like protein EIX2 from Solanum lycopersicum (Tomato).